A 72-amino-acid polypeptide reads, in one-letter code: Crustacean hyperglycemic hormone (72 aa).

Residue glutamine 1 is modified to Pyrrolidone carboxylic acid; partial. 3 disulfide bridges follow: cysteine 7-cysteine 43, cysteine 23-cysteine 39, and cysteine 26-cysteine 52. Valine 72 is subject to Valine amide.

It belongs to the arthropod CHH/MIH/GIH/VIH hormone family. Post-translationally, the N-terminus forms pyrrolidone carboxylic acid in isoform CHH-II and is free in isoform CHH-I. In terms of tissue distribution, produced by the medulla terminalis X-organ in the eyestalks and transported to the sinus gland where they are stored and released.

The protein localises to the secreted. In terms of biological role, hormone found in the sinus gland of isopods and decapods which controls the blood sugar level. Has a secretagogue action over the amylase released from the midgut gland. May act as a stress hormone and may be involved in the control of molting and reproduction. The sequence is that of Crustacean hyperglycemic hormone from Cancer pagurus (Rock crab).